The following is a 79-amino-acid chain: UPF0654 protein C11D3.01c (79 aa).

The interval 1 to 79 (MPNPGNVIGG…RAQEELENLE (79 aa)) is disordered. Basic and acidic residues predominate over residues 22 to 45 (EETKQREKEYLEEHEGEVGEEHQK).

Belongs to the UPF0654 (con-6) family.

This Schizosaccharomyces pombe (strain 972 / ATCC 24843) (Fission yeast) protein is UPF0654 protein C11D3.01c.